The primary structure comprises 959 residues: Bifunctional premutilin synthase (959 aa).

Residues 1 to 542 (MGLSEDLHAR…ALNVPIPRFD (542 aa)) form a class II diterpene cyclase region. A DXDD motif motif is present at residues 309–312 (DADM). The For class II diterpene cyclase activity role is filled by aspartate 311. The segment at 543-959 (PSSISTLPAI…TANGSNGIHH (417 aa)) is class I diterpene synthase. The For class I diterpene synthase activity role is filled by aspartate 649. Mg(2+) contacts are provided by aspartate 649, aspartate 653, and asparagine 824. Positions 649–653 (DDYLD) match the DDXXD motif motif. Positions 931–959 (KGTNGVKKINGSSTNGTKVTANGSNGIHH) are disordered. The segment covering 940–959 (NGSSTNGTKVTANGSNGIHH) has biased composition (polar residues).

The protein belongs to the terpene synthase family. Mg(2+) serves as cofactor.

The protein operates within secondary metabolite biosynthesis; terpenoid biosynthesis. In terms of biological role, bifunctional premutilin synthase; part of the gene cluster that mediates the biosynthesis of pleuromutilin, a tricyclic diterpene showing antibacterial properties. The geranylgeranyl diphosphate (GGPP) synthase catalyzes the first step in pleuromutilin biosynthesis. GGPP is then substrate of the premutilin synthase (PS) to yield premutilin. Premutilin synthase is a bifunctional enzyme composed of the fusion of a class II diterpene cyclase (DTC) and a class I diterpene synthase (DTS), with the corresponding domains and active sites containing characteristic aspartate-rich motifs. GGPP is first converted to mutildienyl-diphosphate (MPP) at the class II DTC site. MPP is subsequently further cyclized at the class I DTS site, followed by a 1,5-hydride shift and addition of water prior to terminating deprotonation, to yield premutilin. In addition to the aforementioned GGPP synthase and bifunctional diterpene synthase, the cluster also contains three cytochrome P450 monooxygenases, a short-chain alcohol dehydrogenase, and an acyltransferase, involved in the conversion of premutilin to pleuromutilin. The cytochrome P450 monooxygenases P450-1 and P450-2 hydroxylate premutilin at C-11 and C-3, respectively, producing 11-hydroxypremutilin and 3-hydroxypremutilin. The combination of the actions of both ple5 and ple6 leads to the production of 3,11-dihydroxypremutilin. The short chain dehydrogenase SDR further converts 3,11-dihydroxypremutilin into mutilin. The acetyltransferase ATF then acetylates mutilin to produce 14-O-acetylmutilin. Finally, the cytochrome P450 monooxygenase P450-3 catalyzes hydroxylation on the alpha position of the acetyl side chain of 14-O-acetylmutilin to yield pleuromutilin. In Clitopilus passeckerianus (Pleurotus passeckerianus), this protein is Bifunctional premutilin synthase.